We begin with the raw amino-acid sequence, 567 residues long: Glutamate--tRNA ligase (567 aa).

The short motif at 106–116 (PNPDGPLHLGN) is the 'HIGH' region element.

Belongs to the class-I aminoacyl-tRNA synthetase family. Glutamate--tRNA ligase type 2 subfamily.

The protein localises to the cytoplasm. It carries out the reaction tRNA(Glu) + L-glutamate + ATP = L-glutamyl-tRNA(Glu) + AMP + diphosphate. Catalyzes the attachment of glutamate to tRNA(Glu) in a two-step reaction: glutamate is first activated by ATP to form Glu-AMP and then transferred to the acceptor end of tRNA(Glu). The chain is Glutamate--tRNA ligase from Sulfolobus acidocaldarius (strain ATCC 33909 / DSM 639 / JCM 8929 / NBRC 15157 / NCIMB 11770).